An 855-amino-acid polypeptide reads, in one-letter code: E3 ubiquitin-protein ligase TRIM71 (855 aa).

Ala2 bears the N-acetylalanine mark. An RING-type zinc finger spans residues 12–94 (CLLCKEMCGS…ALKLRCPVCD (83 aa)). The span at 26–42 (SSSSSASSSSSQTSTSS) shows a compositional bias: low complexity. Disordered regions lie at residues 26–48 (SSSS…GGGP) and 126–177 (ADEP…SPGS). Residues 135–145 (RAGGGPGGAGG) show a composition bias toward gly residues. Over residues 147–157 (SNHRHHAHHPA) the composition is skewed to basic residues. The B box-type 1; atypical zinc finger occupies 181–228 (RRPHGCSSCDEGNAASSRCLDCQEHLCDNCVRAHQRVRLTKDHYIERG). The B box-type 2 zinc-finger motif lies at 260–301 (ERLGFCQHHDDEVLHLYCDTCSVPICRECTLGRHGGHSFAYL). Zn(2+) contacts are provided by Cys265, His268, Cys288, and His293. The stretch at 378-414 (QVKAKSLYLQVEKLRQNLNKLESTISAVQQVLEEGRA) forms a coiled coil. The stretch at 466 to 567 (SSGAFAPLTK…IENSPFKVVV (102 aa)) is one Filamin repeat. 6 NHL repeats span residues 580-623 (VLSF…FKPC), 627-670 (HHKF…FTFE), 674-717 (LLKF…FGPD), 721-764 (LNKY…IHPD), 768-811 (ARFL…FEAN), and 815-855 (LCKF…ILIF).

Belongs to the TRIM/RBCC family. Interacts (via NHL repeats) with AGO2; the interaction increases in presence of RNA. Interacts with HSP90AA1. Interacts (via NHL repeats) with MOV10, PABPC1, PUM1, PUM2, STAU2, XRN1 and XRN2 in an RNA-dependent manner. Interacts with SHCBP1; leading to enhance its stability. Autoubiquitinated.

The protein resides in the cytoplasm. The protein localises to the P-body. It carries out the reaction S-ubiquitinyl-[E2 ubiquitin-conjugating enzyme]-L-cysteine + [acceptor protein]-L-lysine = [E2 ubiquitin-conjugating enzyme]-L-cysteine + N(6)-ubiquitinyl-[acceptor protein]-L-lysine.. It participates in protein modification; protein ubiquitination. Functionally, E3 ubiquitin-protein ligase that cooperates with the microRNAs (miRNAs) machinery and promotes embryonic stem cells proliferation and maintenance. Binds to miRNAs and associates with AGO2, participating in post-transcriptional repression of transcripts such as CDKN1A. In addition, participates in post-transcriptional mRNA repression in a miRNA independent mechanism. Facilitates the G1-S transition to promote rapid embryonic stem cell self-renewal by repressing CDKN1A expression. Required to maintain proliferation and prevent premature differentiation of neural progenitor cells during early neural development: positively regulates FGF signaling by controlling the stability of SHCBP1. Specific regulator of miRNA biogenesis. Binds to miRNA MIR29A hairpin and postranscriptionally modulates MIR29A levels, which indirectly regulates TET proteins expression. The polypeptide is E3 ubiquitin-protein ligase TRIM71 (Trim71) (Rattus norvegicus (Rat)).